Consider the following 905-residue polypeptide: Protein HID1 (905 aa).

Residues 139–191 (TKTTEIIEEQEKKDQENKQVEENKENEEKKDEEKKDEEKKDEEKKDEDKKENK) are a coiled coil. A compositionally biased stretch (basic and acidic residues) spans 147–191 (EQEKKDQENKQVEENKENEEKKDEEKKDEEKKDEEKKDEDKKENK). Disordered regions lie at residues 147–217 (EQEK…SSFD), 381–404 (DQQP…QQQQ), and 690–793 (SISE…KTQM). Low complexity-rich tracts occupy residues 192–210 (TTTT…NNNN) and 395–404 (HHQQQQQQQQ). Residues 690–700 (SISEEPSTLSN) show a composition bias toward polar residues. Over residues 701–718 (EKSDKTTDGGDHQDESIS) the composition is skewed to basic and acidic residues. The segment covering 719-760 (KSKVQSKPTTEHPNSTGATPSSTNSGTPTIKAFSSTTPNQES) has biased composition (polar residues).

This sequence belongs to the hid-1 family.

This is Protein HID1 (hid1) from Dictyostelium discoideum (Social amoeba).